Here is a 126-residue protein sequence, read N- to C-terminus: Cornifin alpha (126 aa).

Ser-2 carries the N-acetylserine modification. 13 tandem repeats follow at residues 3-14, 18-29, 31-38, 39-46, 47-54, 55-62, 63-70, 71-78, 79-86, 87-94, 95-102, 103-110, and 111-118. The interval 3–29 is 2 X 12 AA approximate repeats; sequence SQQQKQPCTLPPQLQQHQVKQPCQPPP. Residues 20-43 form a disordered region; the sequence is QVKQPCQPPPQEPCVPKTKEPCQP. Residues 31-122 are 11 X 8 AA approximate tandem repeats; the sequence is EPCVPKTKEP…CQPKVPEPCQ (92 aa). The disordered stretch occupies residues 104–126; that stretch reads PCQSKVPQPCQPKVPEPCQTKQK.

It belongs to the cornifin (SPRR) family. As to expression, suprabasal layers of squamous-differentiated tissues such as epidermis, esophagus, tongue and trachea.

The protein localises to the cytoplasm. Functionally, cross-linked envelope protein of keratinocytes. It is a keratinocyte protein that first appears in the cell cytosol, but ultimately becomes cross-linked to membrane proteins by transglutaminase. All that results in the formation of an insoluble envelope beneath the plasma membrane. The sequence is that of Cornifin alpha from Oryctolagus cuniculus (Rabbit).